Reading from the N-terminus, the 505-residue chain is Annexin A11 (505 aa).

Pro residues-rich tracts occupy residues methionine 1–alanine 17 and proline 99–leucine 160. Disordered regions lie at residues methionine 1–glycine 38 and proline 84–glycine 199. The span at proline 161–glycine 177 shows a compositional bias: low complexity. 4 Annexin repeats span residues phenylalanine 200–lysine 271, threonine 272–glutamine 343, serine 355–lysine 427, and asparagine 431–glycine 502. 2 positions are modified to N6-acetyllysine: lysine 248 and lysine 255. At lysine 479 the chain carries N6-acetyllysine.

It belongs to the annexin family. As to quaternary structure, interacts with S100A6. Interacts with PDCD6 in a calcium-dependent manner. Interacts with KIF23 during cytokinesis.

The protein resides in the cytoplasm. The protein localises to the melanosome. It is found in the nucleus envelope. It localises to the nucleus. Its subcellular location is the nucleoplasm. The protein resides in the cytoskeleton. The protein localises to the spindle. In terms of biological role, binds specifically to calcyclin in a calcium-dependent manner. Required for midbody formation and completion of the terminal phase of cytokinesis. This is Annexin A11 (ANXA11) from Homo sapiens (Human).